The following is a 562-amino-acid chain: uncharacterized protein (562 aa).

The next 5 membrane-spanning stretches (helical) occupy residues 15-34, 41-63, 78-97, 104-126, and 165-187; these read WGGG…AFGI, VAGI…HFNL, LILF…FSAF, LNML…HFIT, and IALG…LLGL. RCK C-terminal domains follow at residues 204-286 and 289-374; these read QGLG…ITAF and KPIE…VLGN. 6 consecutive transmembrane segments (helical) span residues 384 to 403, 413 to 430, 450 to 472, 476 to 498, 505 to 524, and 539 to 561; these read LIPI…IPFM, LGLA…SRFG, IGIS…ETII, GYVW…GFIG, NYYT…PALA, and YATV…ILSL.

This sequence belongs to the AAE transporter (TC 2.A.81) family.

It localises to the cell membrane. This is an uncharacterized protein from Bacteroides fragilis (strain YCH46).